The primary structure comprises 263 residues: 3-deoxy-manno-octulosonate cytidylyltransferase (263 aa).

It belongs to the KdsB family.

It localises to the cytoplasm. It carries out the reaction 3-deoxy-alpha-D-manno-oct-2-ulosonate + CTP = CMP-3-deoxy-beta-D-manno-octulosonate + diphosphate. The protein operates within nucleotide-sugar biosynthesis; CMP-3-deoxy-D-manno-octulosonate biosynthesis; CMP-3-deoxy-D-manno-octulosonate from 3-deoxy-D-manno-octulosonate and CTP: step 1/1. It participates in bacterial outer membrane biogenesis; lipopolysaccharide biosynthesis. Activates KDO (a required 8-carbon sugar) for incorporation into bacterial lipopolysaccharide in Gram-negative bacteria. This Burkholderia cenocepacia (strain HI2424) protein is 3-deoxy-manno-octulosonate cytidylyltransferase.